A 394-amino-acid chain; its full sequence is Probable fimbrial assembly protein FimD, serogroup H1 (394 aa).

The protein is Probable fimbrial assembly protein FimD, serogroup H1 (fimD) of Dichelobacter nodosus (Bacteroides nodosus).